Here is a 376-residue protein sequence, read N- to C-terminus: Formate dehydrogenase 2 (376 aa).

Residues valine 97 and asparagine 121 each coordinate substrate. Residues 176 to 177 (RI), aspartate 197, 244 to 248 (PLHKD), threonine 270, aspartate 296, and 325 to 328 (HISG) contribute to the NAD(+) site.

The protein belongs to the D-isomer specific 2-hydroxyacid dehydrogenase family. FDH subfamily. Homodimer.

It localises to the cytoplasm. The catalysed reaction is formate + NAD(+) = CO2 + NADH. Catalyzes the NAD(+)-dependent oxidation of formate to carbon dioxide. Formate oxidation is the final step in the methanol oxidation pathway in methylotrophic microorganisms. Has a role in the detoxification of exogenous formate in non-methylotrophic organisms. This chain is Formate dehydrogenase 2 (FDH2), found in Saccharomyces cerevisiae (strain CEN.PK113-7D) (Baker's yeast).